The chain runs to 257 residues: Acetylglutamate kinase (257 aa).

Residues 41 to 42, Arg63, and Asn158 each bind substrate; that span reads GG.

It belongs to the acetylglutamate kinase family. ArgB subfamily.

Its subcellular location is the cytoplasm. The catalysed reaction is N-acetyl-L-glutamate + ATP = N-acetyl-L-glutamyl 5-phosphate + ADP. Its pathway is amino-acid biosynthesis; L-arginine biosynthesis; N(2)-acetyl-L-ornithine from L-glutamate: step 2/4. In terms of biological role, catalyzes the ATP-dependent phosphorylation of N-acetyl-L-glutamate. The polypeptide is Acetylglutamate kinase (Phocaeicola vulgatus (strain ATCC 8482 / DSM 1447 / JCM 5826 / CCUG 4940 / NBRC 14291 / NCTC 11154) (Bacteroides vulgatus)).